Here is a 260-residue protein sequence, read N- to C-terminus: Cytochrome c oxidase subunit 2 (260 aa).

The Mitochondrial intermembrane segment spans residues 1-43 (MILRSLSCRFLTIALCDAAEPWQLGFQDAATPMMQGIIDLHHD). The helical transmembrane segment at 44–64 (IFFFLILILVFVLWMLVRALW) threads the bilayer. The Mitochondrial matrix portion of the chain corresponds to 65–84 (HFNEQTNPIPQRIVHGTTIE). Residues 85 to 105 (IIWTIFPSVILLFIAIPSFAL) form a helical membrane-spanning segment. The Mitochondrial intermembrane segment spans residues 106 to 260 (LYSMDGVLVD…VSNQLILQTN (155 aa)). Residues His189, Cys224, Glu226, Cys228, His232, and Met235 each contribute to the Cu cation site. Glu226 is a binding site for Mg(2+).

It belongs to the cytochrome c oxidase subunit 2 family. In terms of assembly, component of the cytochrome c oxidase (complex IV, CIV), a multisubunit enzyme composed of a catalytic core of 3 subunits and several supernumerary subunits. The complex exists as a monomer or a dimer and forms supercomplexes (SCs) in the inner mitochondrial membrane with ubiquinol-cytochrome c oxidoreductase (cytochrome b-c1 complex, complex III, CIII). Cu cation is required as a cofactor.

It localises to the mitochondrion inner membrane. It carries out the reaction 4 Fe(II)-[cytochrome c] + O2 + 8 H(+)(in) = 4 Fe(III)-[cytochrome c] + 2 H2O + 4 H(+)(out). In terms of biological role, component of the cytochrome c oxidase, the last enzyme in the mitochondrial electron transport chain which drives oxidative phosphorylation. The respiratory chain contains 3 multisubunit complexes succinate dehydrogenase (complex II, CII), ubiquinol-cytochrome c oxidoreductase (cytochrome b-c1 complex, complex III, CIII) and cytochrome c oxidase (complex IV, CIV), that cooperate to transfer electrons derived from NADH and succinate to molecular oxygen, creating an electrochemical gradient over the inner membrane that drives transmembrane transport and the ATP synthase. Cytochrome c oxidase is the component of the respiratory chain that catalyzes the reduction of oxygen to water. Electrons originating from reduced cytochrome c in the intermembrane space (IMS) are transferred via the dinuclear copper A center (CU(A)) of subunit 2 and heme A of subunit 1 to the active site in subunit 1, a binuclear center (BNC) formed by heme A3 and copper B (CU(B)). The BNC reduces molecular oxygen to 2 water molecules using 4 electrons from cytochrome c in the IMS and 4 protons from the mitochondrial matrix. This is Cytochrome c oxidase subunit 2 (COX2) from Triticum aestivum (Wheat).